We begin with the raw amino-acid sequence, 426 residues long: 3-phosphoshikimate 1-carboxyvinyltransferase (426 aa).

Lys20, Ser21, and Arg25 together coordinate 3-phosphoshikimate. Lys20 contacts phosphoenolpyruvate. Phosphoenolpyruvate-binding residues include Gly92 and Arg120. Residues Ser166, Gln168, Asp312, and Lys339 each coordinate 3-phosphoshikimate. Phosphoenolpyruvate is bound at residue Gln168. Asp312 acts as the Proton acceptor in catalysis. Phosphoenolpyruvate is bound by residues Arg343 and Arg385.

This sequence belongs to the EPSP synthase family. Monomer.

It localises to the cytoplasm. The catalysed reaction is 3-phosphoshikimate + phosphoenolpyruvate = 5-O-(1-carboxyvinyl)-3-phosphoshikimate + phosphate. Its pathway is metabolic intermediate biosynthesis; chorismate biosynthesis; chorismate from D-erythrose 4-phosphate and phosphoenolpyruvate: step 6/7. Catalyzes the transfer of the enolpyruvyl moiety of phosphoenolpyruvate (PEP) to the 5-hydroxyl of shikimate-3-phosphate (S3P) to produce enolpyruvyl shikimate-3-phosphate and inorganic phosphate. The sequence is that of 3-phosphoshikimate 1-carboxyvinyltransferase from Enterococcus faecalis (strain ATCC 700802 / V583).